The sequence spans 205 residues: Dr1-associated corepressor (205 aa).

Positions 14–77 constitute a Histone-fold domain; it reads PARIKKIMQT…SHLKQCIELE (64 aa). The tract at residues 91–205 is disordered; that stretch reads PDMQGDGEDN…DEEDEEDYDS (115 aa). Positions 98 to 108 are enriched in basic and acidic residues; the sequence is EDNHMDGDKGA. Gly residues predominate over residues 114–125; the sequence is PGSGGRKNGGMG. The span at 138–155 shows a compositional bias: acidic residues; that stretch reads SEQEDESEDTDTDGEEET. Residues 184-193 are compositionally biased toward pro residues; the sequence is PLPPAPPGPS. A compositionally biased stretch (acidic residues) spans 195 to 205; it reads PDEEDEEDYDS.

The protein belongs to the NC2 alpha/DRAP1 family. Heterodimer with DR1. Binds BTAF1. In terms of processing, phosphorylation reduces DNA binding, but has no effect on heterodimerization and TBP binding. As to expression, ubiquitous. Highly expressed in adult testis, heart, skeletal muscle, pancreas and brain, and in fetal brain, liver and kidney.

The protein localises to the nucleus. The association of the DR1/DRAP1 heterodimer with TBP results in a functional repression of both activated and basal transcription of class II genes. This interaction precludes the formation of a transcription-competent complex by inhibiting the association of TFIIA and/or TFIIB with TBP. Can bind to DNA on its own. This chain is Dr1-associated corepressor (DRAP1), found in Homo sapiens (Human).